Here is a 462-residue protein sequence, read N- to C-terminus: Argininosuccinate lyase (462 aa).

This sequence belongs to the lyase 1 family. Argininosuccinate lyase subfamily.

Its subcellular location is the cytoplasm. It catalyses the reaction 2-(N(omega)-L-arginino)succinate = fumarate + L-arginine. It functions in the pathway amino-acid biosynthesis; L-arginine biosynthesis; L-arginine from L-ornithine and carbamoyl phosphate: step 3/3. The chain is Argininosuccinate lyase from Bacillus cytotoxicus (strain DSM 22905 / CIP 110041 / 391-98 / NVH 391-98).